The primary structure comprises 467 residues: GTPase Der (467 aa).

EngA-type G domains lie at 3-167 (PTLV…PYEE) and 179-352 (PVIA…AAAR). Residues 9 to 16 (GRPNVGKS), 56 to 60 (DTGGF), 119 to 122 (NKTE), 185 to 192 (GRPNVGKS), 232 to 236 (DTAGL), and 297 to 300 (NKWD) contribute to the GTP site. The 85-residue stretch at 353–437 (AHIPTPKLTR…PLRVEFRTGH (85 aa)) folds into the KH-like domain. The segment at 434 to 467 (RTGHNPYAGKKTPLTEEEARRAHSRRRRNRKKYG) is disordered. A compositionally biased stretch (basic residues) spans 455–467 (AHSRRRRNRKKYG).

It belongs to the TRAFAC class TrmE-Era-EngA-EngB-Septin-like GTPase superfamily. EngA (Der) GTPase family. In terms of assembly, associates with the 50S ribosomal subunit.

Functionally, GTPase that plays an essential role in the late steps of ribosome biogenesis. The protein is GTPase Der of Nitrosomonas europaea (strain ATCC 19718 / CIP 103999 / KCTC 2705 / NBRC 14298).